We begin with the raw amino-acid sequence, 705 residues long: Polyribonucleotide nucleotidyltransferase (705 aa).

Mg(2+) contacts are provided by Asp485 and Asp491. The KH domain maps to 552-611 (PKVFTMSINPSKIKDVIGAGGKTINKIIDETGVKIDIKEDGSVFVTAEDYESGKKALAMI). Positions 621 to 689 (GEVYLGKVTK…SMGRVNLSRK (69 aa)) constitute an S1 motif domain.

The protein belongs to the polyribonucleotide nucleotidyltransferase family. Mg(2+) is required as a cofactor.

It localises to the cytoplasm. The enzyme catalyses RNA(n+1) + phosphate = RNA(n) + a ribonucleoside 5'-diphosphate. Functionally, involved in mRNA degradation. Catalyzes the phosphorolysis of single-stranded polyribonucleotides processively in the 3'- to 5'-direction. The sequence is that of Polyribonucleotide nucleotidyltransferase from Clostridium novyi (strain NT).